We begin with the raw amino-acid sequence, 375 residues long: Tyrosine--tRNA ligase (375 aa).

The L-tyrosine site is built by Y37, Y168, Q172, D175, and Q190. Residues 251 to 255 carry the 'KMSKS' region motif; the sequence is KMSKS. K254 provides a ligand contact to ATP.

Belongs to the class-I aminoacyl-tRNA synthetase family. TyrS type 4 subfamily. Homodimer.

The protein resides in the cytoplasm. It catalyses the reaction tRNA(Tyr) + L-tyrosine + ATP = L-tyrosyl-tRNA(Tyr) + AMP + diphosphate + H(+). Functionally, catalyzes the attachment of tyrosine to tRNA(Tyr) in a two-step reaction: tyrosine is first activated by ATP to form Tyr-AMP and then transferred to the acceptor end of tRNA(Tyr). This chain is Tyrosine--tRNA ligase, found in Thermococcus sibiricus (strain DSM 12597 / MM 739).